Consider the following 672-residue polypeptide: DNA ligase (672 aa).

NAD(+) contacts are provided by residues 35–39 (DAQYD), 84–85 (SL), and Glu115. The N6-AMP-lysine intermediate role is filled by Lys117. 4 residues coordinate NAD(+): Arg138, Glu178, Lys294, and Lys318. Zn(2+)-binding residues include Cys412, Cys415, Cys430, and Cys435. The region spanning 592–672 (ATGGPFVGKS…AFLQMLQTNA (81 aa)) is the BRCT domain.

The protein belongs to the NAD-dependent DNA ligase family. LigA subfamily. It depends on Mg(2+) as a cofactor. Requires Mn(2+) as cofactor.

The enzyme catalyses NAD(+) + (deoxyribonucleotide)n-3'-hydroxyl + 5'-phospho-(deoxyribonucleotide)m = (deoxyribonucleotide)n+m + AMP + beta-nicotinamide D-nucleotide.. DNA ligase that catalyzes the formation of phosphodiester linkages between 5'-phosphoryl and 3'-hydroxyl groups in double-stranded DNA using NAD as a coenzyme and as the energy source for the reaction. It is essential for DNA replication and repair of damaged DNA. This is DNA ligase from Myxococcus xanthus (strain DK1622).